The primary structure comprises 811 residues: Probable glutamine--tRNA ligase (811 aa).

The segment at 190 to 217 is disordered; it reads DAAAGKKKGAKAKNSKQKTVDSGKAKEQ. Over residues 194-205 the composition is skewed to basic residues; the sequence is GKKKGAKAKNSK. The segment covering 207 to 217 has biased composition (basic and acidic residues); that stretch reads KTVDSGKAKEQ. Residues 269–279 carry the 'HIGH' region motif; the sequence is PEPNGYLHIGH. ATP is bound by residues 270–272 and 276–282; these read EPN and HIGHSKA. 2 residues coordinate L-glutamine: Asp302 and Tyr447. ATP is bound by residues Thr466, 495-496, and 503-505; these read RL and MSK. The 'KMSKS' region signature appears at 502 to 506; the sequence is LMSKR.

It belongs to the class-I aminoacyl-tRNA synthetase family.

Its subcellular location is the cytoplasm. It carries out the reaction tRNA(Gln) + L-glutamine + ATP = L-glutaminyl-tRNA(Gln) + AMP + diphosphate. The polypeptide is Probable glutamine--tRNA ligase (qrs1) (Schizosaccharomyces pombe (strain 972 / ATCC 24843) (Fission yeast)).